Here is a 116-residue protein sequence, read N- to C-terminus: Ribosome-binding factor A (116 aa).

This sequence belongs to the RbfA family. Monomer. Binds 30S ribosomal subunits, but not 50S ribosomal subunits or 70S ribosomes.

It localises to the cytoplasm. One of several proteins that assist in the late maturation steps of the functional core of the 30S ribosomal subunit. Associates with free 30S ribosomal subunits (but not with 30S subunits that are part of 70S ribosomes or polysomes). Required for efficient processing of 16S rRNA. May interact with the 5'-terminal helix region of 16S rRNA. This is Ribosome-binding factor A from Pediococcus pentosaceus (strain ATCC 25745 / CCUG 21536 / LMG 10740 / 183-1w).